Reading from the N-terminus, the 272-residue chain is Soluble interferon gamma receptor OPG193 (272 aa).

A signal peptide spans 1–13 (MRYIIILAVLFIN). Residues asparagine 42, asparagine 150, and asparagine 267 are each glycosylated (N-linked (GlcNAc...) asparagine; by host).

This sequence belongs to the type II cytokine receptor family. Homodimer. Interacts with host IFNG.

Its subcellular location is the secreted. In terms of biological role, counteracts the antiviral effects of host IFN-gamma. Acts as a soluble IFN-gamma receptor and thus inhibits the interaction between host IFN-gamma and its receptor. The protein is Soluble interferon gamma receptor OPG193 (OPG193) of Homo sapiens (Human).